The following is a 237-amino-acid chain: Phosphoribosylaminoimidazole-succinocarboxamide synthase (237 aa).

It belongs to the SAICAR synthetase family.

It carries out the reaction 5-amino-1-(5-phospho-D-ribosyl)imidazole-4-carboxylate + L-aspartate + ATP = (2S)-2-[5-amino-1-(5-phospho-beta-D-ribosyl)imidazole-4-carboxamido]succinate + ADP + phosphate + 2 H(+). It functions in the pathway purine metabolism; IMP biosynthesis via de novo pathway; 5-amino-1-(5-phospho-D-ribosyl)imidazole-4-carboxamide from 5-amino-1-(5-phospho-D-ribosyl)imidazole-4-carboxylate: step 1/2. The protein is Phosphoribosylaminoimidazole-succinocarboxamide synthase of Listeria innocua serovar 6a (strain ATCC BAA-680 / CLIP 11262).